The primary structure comprises 294 residues: Elongation factor Ts (294 aa).

Positions threonine 80 to valine 83 are involved in Mg(2+) ion dislocation from EF-Tu.

Belongs to the EF-Ts family.

The protein resides in the cytoplasm. In terms of biological role, associates with the EF-Tu.GDP complex and induces the exchange of GDP to GTP. It remains bound to the aminoacyl-tRNA.EF-Tu.GTP complex up to the GTP hydrolysis stage on the ribosome. The sequence is that of Elongation factor Ts from Listeria monocytogenes serovar 1/2a (strain ATCC BAA-679 / EGD-e).